We begin with the raw amino-acid sequence, 448 residues long: MNFENNSTIAAIATAYGVGSIAIVRISGPKSLSIAQKLSKKKDIQPRVAHLVTLYDDQSEPIDQAILIYFQAPKSFTGEDVVEFQCHGGVVVANMILQELLKAGARLANPGEFSKRAFFNGKIDLSEAEAIAKMIEAKSEDAAKILAKQIKGELKNYIENLREKLIRILAYVEVNIDYAEEDLPKDLQEQIEQQLNDIQEELQKIVASSKRRAGLIEGFKVAIIGKPNTGKSSLLNALLDYERAIVSDIAGTTRDTIEESVRIGTHLVRFVDTAGIREAHDTIEKIGIERSIQAIEESDIVIAMFDASKPLDAEDKKILELIESYKDQKEFIVVANKVDKGKHLDLSDFDALYMSVKKEITPLTQKLQKLLDSFANTEEIMLVTSRQIEAVTYALENINQARTPLQMGELEIFAFHINRVIESIGSITRPMQSSELLDKMFGEFCLGK.

Residues arginine 25, glutamate 83, and lysine 122 each contribute to the (6S)-5-formyl-5,6,7,8-tetrahydrofolate site. Residues 218–372 (GFKVAIIGKP…LTQKLQKLLD (155 aa)) form the TrmE-type G domain. Asparagine 228 serves as a coordination point for K(+). GTP-binding positions include 228 to 233 (NTGKSS), 247 to 253 (SDIAGTT), and 272 to 275 (DTAG). A Mg(2+)-binding site is contributed by serine 232. Positions 247, 249, and 252 each coordinate K(+). Threonine 253 is a Mg(2+) binding site. Residue lysine 448 participates in (6S)-5-formyl-5,6,7,8-tetrahydrofolate binding.

The protein belongs to the TRAFAC class TrmE-Era-EngA-EngB-Septin-like GTPase superfamily. TrmE GTPase family. Homodimer. Heterotetramer of two MnmE and two MnmG subunits. The cofactor is K(+).

It localises to the cytoplasm. Exhibits a very high intrinsic GTPase hydrolysis rate. Involved in the addition of a carboxymethylaminomethyl (cmnm) group at the wobble position (U34) of certain tRNAs, forming tRNA-cmnm(5)s(2)U34. In Nitratiruptor sp. (strain SB155-2), this protein is tRNA modification GTPase MnmE.